A 393-amino-acid chain; its full sequence is Alpha-pyrone synthesis polyketide synthase-like Pks18 (393 aa).

Residues M1–P26 form a disordered region. C175 (nucleophile) is an active-site residue. Residue H221 coordinates substrate.

It belongs to the thiolase-like superfamily. Chalcone/stilbene synthases family. As to quaternary structure, homodimer.

The protein operates within lipid metabolism; fatty acid biosynthesis. Its function is as follows. Involved in the biosynthesis of tri- and tetraketide alpha-pyrones. Pks18 catalyzes the extension of medium- and long-chain aliphatic acyl-CoA substrates by using malonyl-CoA as an extender molecule to synthesize polyketide products. In Mycobacterium bovis (strain ATCC BAA-935 / AF2122/97), this protein is Alpha-pyrone synthesis polyketide synthase-like Pks18 (pks18).